Consider the following 85-residue polypeptide: Small ribosomal subunit protein bS18 (85 aa).

Belongs to the bacterial ribosomal protein bS18 family. Part of the 30S ribosomal subunit. Forms a tight heterodimer with protein bS6.

In terms of biological role, binds as a heterodimer with protein bS6 to the central domain of the 16S rRNA, where it helps stabilize the platform of the 30S subunit. The protein is Small ribosomal subunit protein bS18 of Helicobacter pylori (strain Shi470).